A 565-amino-acid chain; its full sequence is Phospholipase B-like protein C (565 aa).

A signal peptide spans 1 to 21; sequence MNKIIILISLFLNFLFGYVVC. 10 N-linked (GlcNAc...) asparagine glycosylation sites follow: Asn-53, Asn-84, Asn-118, Asn-200, Asn-201, Asn-211, Asn-266, Asn-302, Asn-406, and Asn-485.

The protein belongs to the phospholipase B-like family.

It is found in the secreted. Its function is as follows. Probable phospholipase. This Dictyostelium discoideum (Social amoeba) protein is Phospholipase B-like protein C (plbC).